We begin with the raw amino-acid sequence, 331 residues long: POU domain, class 4, transcription factor 3 (331 aa).

Residues 81 to 97 (TSSSSTVPISHPSSNLP) show a composition bias toward low complexity. Residues 81-108 (TSSSSTVPISHPSSNLPSHHHHHLSHQT) form a disordered region. The POU-specific domain occupies 172–249 (DVESDPRELE…VLQAWLEEAE (78 aa)). Positions 267 to 326 (RKRKRTSIAAPEKRSLEAYFAIQPRPSSEKIAAIAEKLDLKKNVVRVWFCNQRQKQKRMK) form a DNA-binding region, homeobox.

It belongs to the POU transcription factor family. Class-4 subfamily. In terms of assembly, interaction with ISL1. Expressed in the nervous system. Expressed in the otic vesicle during embryogenesis. Expressed in the adult retina in a subset of retinal ganglion cells (RGCs), and at a lower level in the adult tectum. Not expressed in the adult olfactory bulb.

The protein localises to the nucleus. It is found in the cytoplasm. Acts as a transcriptional activator. Acts by binding to sequences related to the consensus octamer motif 5'-ATGCAAAT-3' in the regulatory regions of its target genes. May play a role in specifying terminally differentiated neuronal phenotypes. The sequence is that of POU domain, class 4, transcription factor 3 (pou4f3) from Danio rerio (Zebrafish).